The chain runs to 107 residues: uncharacterized protein (107 aa).

Residues 25–42 (LSLCSVLLSWLICAMCLW) form a helical membrane-spanning segment.

It is found in the host membrane. This is an uncharacterized protein from Galliformes (FAdV-1).